Here is a 462-residue protein sequence, read N- to C-terminus: PTS system mannitol-specific cryptic EIICB component (462 aa).

Residues 1 to 24 (MENKSARAKVQAFGGFLTAMVIPN) lie on the Cytoplasmic side of the membrane. The PTS EIIC type-2 domain occupies 13–344 (FGGFLTAMVI…LKMEKTVETE (332 aa)). The chain crosses the membrane as a helical span at residues 25–46 (IGAFIAWGFITALFIPTGWLPN). Topologically, residues 47 to 50 (EHFA) are periplasmic. Residues 51-71 (KIVGPMITYLLPVMIGSTGGH) form a helical membrane-spanning segment. Residues 72-134 (LVGGKRGAVM…AGFEMVINNF (63 aa)) are Cytoplasmic-facing. Residues 135–156 (SLGIAGMLLCLLGFEVIGPAVL) traverse the membrane as a helical segment. Over 157-165 (IANTFVKEC) the chain is Periplasmic. Residues 166–186 (IEALVHAGYLPLLSVINEPAK) form a helical membrane-spanning segment. Over 187–273 (VLFLNNAIDQ…VLMKPLTIIA (87 aa)) the chain is Cytoplasmic. Residues 274-293 (MIAGGMSGTWMFNLLDGGLV) form a helical membrane-spanning segment. The Periplasmic portion of the chain corresponds to 294-313 (AGPSPGSIFAYLALTPKGSF). Residues 314 to 335 (LATIAGVTVGTLVSFAITSLIL) form a helical membrane-spanning segment. At 336–462 (KMEKTVETES…FNQLTAEHKH (127 aa)) the chain is on the cytoplasmic side. In terms of domain architecture, PTS EIIB type-2 spans 371–461 (KRIAFVCDAG…LFNQLTAEHK (91 aa)). The active-site Phosphocysteine intermediate; for EIIB activity is Cys377. A Phosphocysteine; by EIIA modification is found at Cys377.

It is found in the cell inner membrane. It carries out the reaction D-mannitol(out) + N(pros)-phospho-L-histidyl-[protein] = D-mannitol 1-phosphate(in) + L-histidyl-[protein]. The phosphoenolpyruvate-dependent sugar phosphotransferase system (sugar PTS), a major carbohydrate active transport system, catalyzes the phosphorylation of incoming sugar substrates concomitantly with their translocation across the cell membrane. The enzyme II CmtAB PTS system is involved in D-mannitol transport. This chain is PTS system mannitol-specific cryptic EIICB component (cmtA), found in Escherichia coli O157:H7.